The chain runs to 67 residues: Kappa-scoloptoxin(04)-Ssd1b (67 aa).

The first 24 residues, 1 to 24 (MKKTCVVSVFLVLLLLKFHDLSMG), serve as a signal peptide directing secretion. Residues 25–36 (EEISPLKKVARR) constitute a propeptide that is removed on maturation. Intrachain disulfides connect Cys44/Cys55 and Cys49/Cys62.

As to expression, expressed by the venom gland.

The protein localises to the secreted. The protein is Kappa-scoloptoxin(04)-Ssd1b of Scolopendra dehaani (Thai centipede).